The chain runs to 124 residues: Small ribosomal subunit protein bS6 (124 aa).

The segment at 97–124 is disordered; that stretch reads TGPSPMMKEVQREEAKKAAAAQPTEAQA. The span at 114 to 124 shows a compositional bias: low complexity; the sequence is AAAAQPTEAQA.

This sequence belongs to the bacterial ribosomal protein bS6 family.

Binds together with bS18 to 16S ribosomal RNA. The chain is Small ribosomal subunit protein bS6 from Paraburkholderia phymatum (strain DSM 17167 / CIP 108236 / LMG 21445 / STM815) (Burkholderia phymatum).